The following is a 122-amino-acid chain: Large ribosomal subunit protein uL14 (122 aa).

The protein belongs to the universal ribosomal protein uL14 family. Part of the 50S ribosomal subunit. Forms a cluster with proteins L3 and L19. In the 70S ribosome, L14 and L19 interact and together make contacts with the 16S rRNA in bridges B5 and B8.

In terms of biological role, binds to 23S rRNA. Forms part of two intersubunit bridges in the 70S ribosome. This Psychromonas ingrahamii (strain DSM 17664 / CCUG 51855 / 37) protein is Large ribosomal subunit protein uL14.